The sequence spans 553 residues: MKRPRSRLWYDGLENTPHRVYLRAIGFTSDDFQKPLIAVVAAWSEAGPCNFNVLPGSLRVKEGVRSAGGVPLAVPTIVVNDGINMGTPGMRYSLISRELIADTIEAQVASHGFDGWVGIGGCDKTQPGIMMAMARLDLPSIYIYGGTAEHGVLDGETVTVQSAFEAVGAYLKGLIDEERLYEIEKAAMPTPGTCQGLFTANTMAILAEALGLSPLGSASPPATSSERARELARAGALAVGLVETGLTPRRILTYEAFYNAIVTLMAISGSTNAVLHLLAIAREAGVKLALDDFDEASRKVPVIAALAPAGKYTMVDLHNVGGAPVILRKLLDRGLLYGEAVTVEGVEIGKLLSKWEPRTDYNILYDFDKPYKPHAGLRILRGSLAPRGAVMKIGASGILKFKGAAKVFDSEEEAFKAIERGYVEEGDVVVVRYVGPKGAPGMPEMLKITAAIVGAGLGEKVALITDGRFSGATRGVMVGHAAPEAAVGGPIALVENGDEIVIDGEKGTLDVLLGGDELARRRDKWSPPPLPKQGLLRKYAKLVTQADEGAVTH.

Cys49 is a binding site for [2Fe-2S] cluster. Position 81 (Asp81) interacts with Mg(2+). Cys122 contributes to the [2Fe-2S] cluster binding site. Asp123 and Lys124 together coordinate Mg(2+). Lys124 is subject to N6-carboxylysine. Residue Cys194 coordinates [2Fe-2S] cluster. Residue Glu444 participates in Mg(2+) binding. Ser470 (proton acceptor) is an active-site residue.

This sequence belongs to the IlvD/Edd family. In terms of assembly, homodimer. [2Fe-2S] cluster is required as a cofactor. It depends on Mg(2+) as a cofactor.

The enzyme catalyses (2R)-2,3-dihydroxy-3-methylbutanoate = 3-methyl-2-oxobutanoate + H2O. It carries out the reaction (2R,3R)-2,3-dihydroxy-3-methylpentanoate = (S)-3-methyl-2-oxopentanoate + H2O. It participates in amino-acid biosynthesis; L-isoleucine biosynthesis; L-isoleucine from 2-oxobutanoate: step 3/4. It functions in the pathway amino-acid biosynthesis; L-valine biosynthesis; L-valine from pyruvate: step 3/4. Functionally, functions in the biosynthesis of branched-chain amino acids. Catalyzes the dehydration of (2R,3R)-2,3-dihydroxy-3-methylpentanoate (2,3-dihydroxy-3-methylvalerate) into 2-oxo-3-methylpentanoate (2-oxo-3-methylvalerate) and of (2R)-2,3-dihydroxy-3-methylbutanoate (2,3-dihydroxyisovalerate) into 2-oxo-3-methylbutanoate (2-oxoisovalerate), the penultimate precursor to L-isoleucine and L-valine, respectively. This is Dihydroxy-acid dehydratase from Aeropyrum pernix (strain ATCC 700893 / DSM 11879 / JCM 9820 / NBRC 100138 / K1).